Here is a 242-residue protein sequence, read N- to C-terminus: Carboxy-S-adenosyl-L-methionine synthase (242 aa).

S-adenosyl-L-methionine contacts are provided by residues tyrosine 39, 64–66, 89–90, 117–118, asparagine 132, and arginine 199; these read GCS, DN, and DI.

Belongs to the class I-like SAM-binding methyltransferase superfamily. Cx-SAM synthase family. As to quaternary structure, homodimer.

The enzyme catalyses prephenate + S-adenosyl-L-methionine = carboxy-S-adenosyl-L-methionine + 3-phenylpyruvate + H2O. Catalyzes the conversion of S-adenosyl-L-methionine (SAM) to carboxy-S-adenosyl-L-methionine (Cx-SAM). This is Carboxy-S-adenosyl-L-methionine synthase from Psychromonas ingrahamii (strain DSM 17664 / CCUG 51855 / 37).